Consider the following 102-residue polypeptide: UPF0473 protein SAS1551 (102 aa).

Belongs to the UPF0473 family.

The polypeptide is UPF0473 protein SAS1551 (Staphylococcus aureus (strain MSSA476)).